The following is a 299-amino-acid chain: MTDNTRLRIAMQKSGRLSDDSRELLARCGIKINLHTQRLIAMAENMPIDILRVRDDDIPGLVMDGVVDLGIIGENVLEEELLNRRAQGEDPRYFTLRRLDFGGCRLSLATPVDEAWDGPLSLNGKRIATSYPHLLKRYLDQKGISFKSCLLNGSVEVAPRAGLADAICDLVSTGATLEANGLREVEVIYRSKACLIQRDGEMEESKQQLIDKLLTRIQGVIQARESKYIMMHAPTERLDEVIALLPGAERPTILPLAGDQQRVAMHMVSSETLFWETMEKLKALGASSILVLPIEKMME.

The protein belongs to the ATP phosphoribosyltransferase family. Long subfamily. In terms of assembly, equilibrium between an active dimeric form, an inactive hexameric form and higher aggregates. Interconversion between the various forms is largely reversible and is influenced by the natural substrates and inhibitors of the enzyme. Requires Mg(2+) as cofactor.

The protein resides in the cytoplasm. It carries out the reaction 1-(5-phospho-beta-D-ribosyl)-ATP + diphosphate = 5-phospho-alpha-D-ribose 1-diphosphate + ATP. The protein operates within amino-acid biosynthesis; L-histidine biosynthesis; L-histidine from 5-phospho-alpha-D-ribose 1-diphosphate: step 1/9. Its activity is regulated as follows. Feedback inhibited by histidine. Catalyzes the condensation of ATP and 5-phosphoribose 1-diphosphate to form N'-(5'-phosphoribosyl)-ATP (PR-ATP). Has a crucial role in the pathway because the rate of histidine biosynthesis seems to be controlled primarily by regulation of HisG enzymatic activity. This Escherichia coli O8 (strain IAI1) protein is ATP phosphoribosyltransferase.